The sequence spans 587 residues: Pyruvate decarboxylase 3 (587 aa).

D48 and H135 together coordinate substrate. The thiamine pyrophosphate binding stretch occupies residues 415-496 (DSWFNCQKLR…FLINNGGYTI (82 aa)). The Mg(2+) site is built by D464, N491, and G493. E497 serves as a coordination point for substrate.

The protein belongs to the TPP enzyme family. Homotetramer. A metal cation serves as cofactor. Thiamine diphosphate is required as a cofactor.

The enzyme catalyses a 2-oxocarboxylate + H(+) = an aldehyde + CO2. This is Pyruvate decarboxylase 3 (PDC3) from Oryza sativa subsp. indica (Rice).